Reading from the N-terminus, the 205-residue chain is Riboflavin kinase (205 aa).

The tract at residues methionine 1–arginine 24 is disordered. Mg(2+)-binding residues include threonine 44 and asparagine 46. Glutamate 104 (nucleophile) is an active-site residue.

Belongs to the flavokinase family. Zn(2+) is required as a cofactor. Requires Mg(2+) as cofactor.

The enzyme catalyses riboflavin + ATP = FMN + ADP + H(+). Its pathway is cofactor biosynthesis; FMN biosynthesis; FMN from riboflavin (ATP route): step 1/1. In terms of biological role, catalyzes the phosphorylation of riboflavin (vitamin B2) to form flavin mononucleotide (FMN) coenzyme. The sequence is that of Riboflavin kinase (fmn1) from Aspergillus terreus (strain NIH 2624 / FGSC A1156).